We begin with the raw amino-acid sequence, 35 residues long: Photosystem II reaction center protein T (35 aa).

A helical membrane pass occupies residues 3–23; sequence ALVYTFLLVGTLGIIFFAIFF.

The protein belongs to the PsbT family. In terms of assembly, PSII is composed of 1 copy each of membrane proteins PsbA, PsbB, PsbC, PsbD, PsbE, PsbF, PsbH, PsbI, PsbJ, PsbK, PsbL, PsbM, PsbT, PsbY, PsbZ, Psb30/Ycf12, at least 3 peripheral proteins of the oxygen-evolving complex and a large number of cofactors. It forms dimeric complexes.

It localises to the plastid. The protein localises to the chloroplast thylakoid membrane. Its function is as follows. Found at the monomer-monomer interface of the photosystem II (PS II) dimer, plays a role in assembly and dimerization of PSII. PSII is a light-driven water plastoquinone oxidoreductase, using light energy to abstract electrons from H(2)O, generating a proton gradient subsequently used for ATP formation. The polypeptide is Photosystem II reaction center protein T (Chara vulgaris (Common stonewort)).